We begin with the raw amino-acid sequence, 1394 residues long: Ninein-like protein (1394 aa).

EF-hand domains lie at His-8–Glu-43 and Leu-42–Ser-77. Disordered stretches follow at residues Ser-77–Val-99 and Lys-126–Gln-166. At Ser-149 the chain carries Phosphoserine. Residues Glu-151–Gln-166 show a composition bias toward basic and acidic residues. 2 consecutive EF-hand domains span residues Thr-197–His-232 and Leu-234–Pro-269. Asp-247, Asp-249, Asp-251, Arg-253, and Glu-258 together coordinate Ca(2+). Coiled coils occupy residues Arg-382 to Cys-423, Trp-461 to Lys-515, and Glu-544 to Ser-584. Residues Lys-494 to Asn-496 carry the KEN box motif. The tract at residues Leu-578 to Ala-602 is disordered. The short motif at Arg-632–Asn-640 is the D-box element. A coiled-coil region spans residues Glu-835 to Asn-863. A compositionally biased stretch (polar residues) spans Thr-866–Gln-893. The segment at Thr-866 to Gln-977 is disordered. A compositionally biased stretch (basic and acidic residues) spans Arg-939 to Gln-951. 2 coiled-coil regions span residues Ser-1057 to Glu-1229 and Gly-1269 to Gln-1331.

As to quaternary structure, interacts with gamma-tubulin and TUBGCP4. Interacts with anaphase promoting complex/cyclosome (APC/C). Interacts with CDC20 and FZR1. Interacts with LCA5 and USH2A. Phosphorylated by PLK1 which disrupts its centrosome association and interaction with gamma-tubulin. In terms of processing, ubiquitinated by the APC/C complex leading to its degradation.

The protein localises to the cytoplasm. It localises to the cytoskeleton. It is found in the microtubule organizing center. Its subcellular location is the centrosome. In terms of biological role, involved in the microtubule organization in interphase cells. Overexpression induces the fragmentation of the Golgi, and causes lysosomes to disperse toward the cell periphery; it also interferes with mitotic spindle assembly. Involved in vesicle transport in photoreceptor cells. This chain is Ninein-like protein (Ninl), found in Mus musculus (Mouse).